A 50-amino-acid chain; its full sequence is Large ribosomal subunit protein eL40 (50 aa).

The protein belongs to the eukaryotic ribosomal protein eL40 family.

The polypeptide is Large ribosomal subunit protein eL40 (Aeropyrum pernix (strain ATCC 700893 / DSM 11879 / JCM 9820 / NBRC 100138 / K1)).